The sequence spans 814 residues: MSSSDSDSVSLSIRRRQRRGSSKRISMKESDEESDSSENHPLSESLNKKSKSESDEDDIPIRKRRASSKKNMSNSSSKKRAKVMGNGGLKNGKKTAVVKEEEDFNEIAKPSPKHKRVSKANGSKNGAKSAVKKEESDTDDSVPLRAVSTVSLTPYKSELPSGASTTQNRSPNDEEDEDEDYKWWTSENIDDTQKWTTLEHNGVIFAPPYEPLPKNVKLIYDGNPVNLPPEAEEVAGFYAAMLETDHAKNPVFQDNFFRDFLKVCDECNFNHNIKEFSKCDFTQMFHHFEQKREEKKSMPKEQKKAIKQKKDEEEEKYKWCILDGRKEKVGNFRIEPPGLFRGRGSHPKTGSLKRRVYPEQITINIGEGVPVPEPLPGHQWAEVKHDNTVTWLATWHENINNNVKYVFLAAGSSLKGQSDLKKYEKSRKLKDYIDDIRKGYRKDLKSELTVERQRGTAMYLIDVFALRAGNEKGEDEADTVGCCSLRYEHVTLKPPRTVVFDFLGKDSIRYYNEVEVDPQVFKNLKIFKRPPKKEGDLIFDRLSTNSLNKYLTSLMDGLSAKVFRTYNASYTMAEELKKMPKNLTLADKILFYNRANRTVAILCNHQRSVTKNHDVQMERFAERIKALQYQRMRLRKMMLNLEPKLAKSKPELLAKEEGITDSWIVKHHETLYELEKEKIKKKFDRENEKLAAEDPKSVLPESELEVRLKAADELKKALDAELKSKKVDPGRSSMEQLEKRLNKLNERINVMRTQMIDKDENKTTALGTSKINYIDPRLTYSFSKREDVPIEKLFSKTIRDKFNWAADTPPDWKW.

Positions 1-12 are enriched in low complexity; it reads MSSSDSDSVSLS. Residues 1–180 are disordered; it reads MSSSDSDSVS…PNDEEDEDED (180 aa). The segment covering 13 to 22 has biased composition (basic residues); sequence IRRRQRRGSS. Phosphoserine occurs at positions 52, 54, and 136. At Thr138 the chain carries Phosphothreonine. Interaction with DNA regions lie at residues 404-405, 467-472, and 559-561; these read KY, RAGNEK, and SAK. The Topo IB-type catalytic domain maps to 411–814; the sequence is GSSLKGQSDL…AADTPPDWKW (404 aa). The active-site O-(3'-phospho-DNA)-tyrosine intermediate is the Tyr773.

The protein belongs to the type IB topoisomerase family. Monomer.

It carries out the reaction ATP-independent breakage of single-stranded DNA, followed by passage and rejoining.. In terms of biological role, releases the supercoiling and torsional tension of DNA introduced during the DNA replication and transcription by transiently cleaving and rejoining one strand of the DNA duplex. Introduces a single-strand break via transesterification at a target site in duplex DNA. The scissile phosphodiester is attacked by the catalytic tyrosine of the enzyme, resulting in the formation of a DNA-(3'-phosphotyrosyl)-enzyme intermediate and the expulsion of a 5'-OH DNA strand. TThe free DNA strand then rotates around the intact phosphodiester bond on the opposing strand, thus removing DNA supercoils. Finally, in the religation step, the DNA 5'-OH attacks the covalent intermediate to expel the active-site tyrosine and restore the DNA phosphodiester backbone. This is DNA topoisomerase 1 (top1) from Schizosaccharomyces pombe (strain 972 / ATCC 24843) (Fission yeast).